The sequence spans 101 residues: uncharacterized protein (101 aa).

A signal peptide spans 1–24 (MILMFRMNKGMSFITLLFSLALFS).

This is an uncharacterized protein from Haemophilus influenzae (strain ATCC 51907 / DSM 11121 / KW20 / Rd).